A 221-amino-acid chain; its full sequence is Nuclear phosphoprotein UL3 homolog (221 aa).

Belongs to the alphaherpesvirinae HHV-1 UL3 family. Phosphorylated.

The protein resides in the host nucleus. The chain is Nuclear phosphoprotein UL3 homolog from Varicella-zoster virus (strain Oka vaccine) (HHV-3).